A 338-amino-acid chain; its full sequence is Glycerol-3-phosphate dehydrogenase [NAD(P)+] 1 (338 aa).

NADPH contacts are provided by Ser-11, Trp-12, His-32, Arg-33, and Lys-109. Sn-glycerol 3-phosphate is bound by residues Lys-109, Gly-140, and Ser-142. Ala-144 contacts NADPH. Residues Lys-195, Asp-248, Ser-258, Arg-259, and Asn-260 each contribute to the sn-glycerol 3-phosphate site. Lys-195 functions as the Proton acceptor in the catalytic mechanism. Arg-259 contacts NADPH. NADPH is bound by residues Val-283 and Glu-285.

Belongs to the NAD-dependent glycerol-3-phosphate dehydrogenase family.

It is found in the cytoplasm. The enzyme catalyses sn-glycerol 3-phosphate + NAD(+) = dihydroxyacetone phosphate + NADH + H(+). It catalyses the reaction sn-glycerol 3-phosphate + NADP(+) = dihydroxyacetone phosphate + NADPH + H(+). Its pathway is membrane lipid metabolism; glycerophospholipid metabolism. In terms of biological role, catalyzes the reduction of the glycolytic intermediate dihydroxyacetone phosphate (DHAP) to sn-glycerol 3-phosphate (G3P), the key precursor for phospholipid synthesis. In Lactobacillus delbrueckii subsp. bulgaricus (strain ATCC 11842 / DSM 20081 / BCRC 10696 / JCM 1002 / NBRC 13953 / NCIMB 11778 / NCTC 12712 / WDCM 00102 / Lb 14), this protein is Glycerol-3-phosphate dehydrogenase [NAD(P)+] 1.